The sequence spans 213 residues: MNHNEIIKYPLLTEKSYKTMAQNVYVFAVDRRARKIEIKDAIEFIFEVKVEKINLFNVPQKEKKVGRFKGLTNSYKKAYVYLREGKINIFPEEIEKEQKVEKQLIKEKSTSELKLEEKIAAKIAAKEQSEIKDEIVKSVPKKVTSIKKEITSKEVTPIKKTTSVKKETSPKEITSVKKTTTKEKDKTLVVAKKATIDTKVKSTTTKKTTTKKV.

The interval 1 to 117 (MNHNEIIKYP…KSTSELKLEE (117 aa)) is large ribosomal subunit protein uL23. The interval 118–213 (KIAAKIAAKE…TTKKTTTKKV (96 aa)) is unknown.

This sequence belongs to the universal ribosomal protein uL23 family. In terms of assembly, part of the 50S ribosomal subunit. Contacts protein L29, and trigger factor when it is bound to the ribosome.

One of the early assembly proteins it binds 23S rRNA. One of the proteins that surrounds the polypeptide exit tunnel on the outside of the ribosome. Forms the main docking site for trigger factor binding to the ribosome. The protein is Large ribosomal subunit protein uL23 of Mycoplasma mobile (strain ATCC 43663 / 163K / NCTC 11711) (Mesomycoplasma mobile).